Reading from the N-terminus, the 205-residue chain is Thymidylate kinase (205 aa).

7–14 is a binding site for ATP; the sequence is GIDGSGKT.

It belongs to the thymidylate kinase family.

The catalysed reaction is dTMP + ATP = dTDP + ADP. Its function is as follows. Phosphorylation of dTMP to form dTDP in both de novo and salvage pathways of dTTP synthesis. The sequence is that of Thymidylate kinase from Wolbachia sp. subsp. Brugia malayi (strain TRS).